The following is a 225-amino-acid chain: UPF0758 protein BCE33L4198 (225 aa).

An MPN domain is found at 103 to 225; the sequence is SIRNPEDCAR…FVSLKEKGHI (123 aa). Residues H174, H176, and D187 each coordinate Zn(2+). The short motif at 174–187 is the JAMM motif element; sequence HNHPSGDPAPSRED.

This sequence belongs to the UPF0758 family.

This Bacillus cereus (strain ZK / E33L) protein is UPF0758 protein BCE33L4198.